A 267-amino-acid chain; its full sequence is UPF0162 protein HI_1558 (267 aa).

The protein belongs to the UPF0162 family.

This chain is UPF0162 protein HI_1558, found in Haemophilus influenzae (strain ATCC 51907 / DSM 11121 / KW20 / Rd).